Here is a 447-residue protein sequence, read N- to C-terminus: Signal recognition particle protein (447 aa).

GTP is bound by residues 108–115 (GLQGSGKT), 190–194 (DTAGR), and 248–251 (TKLD).

Belongs to the GTP-binding SRP family. SRP54 subfamily. In terms of assembly, part of the signal recognition particle protein translocation system, which is composed of SRP and FtsY. Interacts with RNA.

It localises to the cytoplasm. It catalyses the reaction GTP + H2O = GDP + phosphate + H(+). Its function is as follows. Involved in targeting and insertion of nascent membrane proteins into the cytoplasmic membrane. Binds to the hydrophobic signal sequence of the ribosome-nascent chain (RNC) as it emerges from the ribosomes. The SRP-RNC complex is then targeted to the cytoplasmic membrane where it interacts with the SRP receptor FtsY. This Mycoplasma mycoides protein is Signal recognition particle protein.